A 612-amino-acid chain; its full sequence is Arginine--tRNA ligase (612 aa).

The 'HIGH' region signature appears at 152-162 (PNIAKEMHVGH).

The protein belongs to the class-I aminoacyl-tRNA synthetase family. As to quaternary structure, monomer.

It is found in the cytoplasm. The catalysed reaction is tRNA(Arg) + L-arginine + ATP = L-arginyl-tRNA(Arg) + AMP + diphosphate. The sequence is that of Arginine--tRNA ligase from Prochlorococcus marinus (strain MIT 9313).